The chain runs to 748 residues: Catalase-peroxidase (748 aa).

The tryptophyl-tyrosyl-methioninium (Trp-Tyr) (with M-264) cross-link spans 92–238 (WHSAGTYRTG…LAAVQMGLIY (147 aa)). H93 serves as the catalytic Proton acceptor. The segment at residues 238–264 (YVNPEGPDGNPDPLLAAKDIRDTFGRM) is a cross-link (tryptophyl-tyrosyl-methioninium (Tyr-Met) (with W-92)). H279 lines the heme b pocket.

It belongs to the peroxidase family. Peroxidase/catalase subfamily. As to quaternary structure, homodimer or homotetramer. It depends on heme b as a cofactor. In terms of processing, formation of the three residue Trp-Tyr-Met cross-link is important for the catalase, but not the peroxidase activity of the enzyme.

It catalyses the reaction H2O2 + AH2 = A + 2 H2O. It carries out the reaction 2 H2O2 = O2 + 2 H2O. Functionally, bifunctional enzyme with both catalase and broad-spectrum peroxidase activity. This Xanthomonas campestris pv. campestris (strain 8004) protein is Catalase-peroxidase.